Reading from the N-terminus, the 97-residue chain is Plasmid stability protein StbC (97 aa).

Involved in plasmid stability. The polypeptide is Plasmid stability protein StbC (stbC) (Pseudomonas syringae pv. tomato (strain ATCC BAA-871 / DC3000)).